Reading from the N-terminus, the 136-residue chain is Small ribosomal subunit protein uS9 (136 aa).

The segment at 111 to 136 (TRDPRMKERKKTGQPGARKRFQFSKR) is disordered. Positions 117–136 (KERKKTGQPGARKRFQFSKR) are enriched in basic residues.

Belongs to the universal ribosomal protein uS9 family.

The protein is Small ribosomal subunit protein uS9 of Methylacidiphilum infernorum (isolate V4) (Methylokorus infernorum (strain V4)).